A 132-amino-acid polypeptide reads, in one-letter code: Small ribosomal subunit protein uS8 (132 aa).

This sequence belongs to the universal ribosomal protein uS8 family. Part of the 30S ribosomal subunit. Contacts proteins S5 and S12.

In terms of biological role, one of the primary rRNA binding proteins, it binds directly to 16S rRNA central domain where it helps coordinate assembly of the platform of the 30S subunit. The polypeptide is Small ribosomal subunit protein uS8 (Psychrobacter arcticus (strain DSM 17307 / VKM B-2377 / 273-4)).